The sequence spans 103 residues: Vesicle-associated membrane protein 3 (103 aa).

The interval 1–25 (MSTGVPSGSSAATGSNRRLQQTQNQ) is disordered. At 1–81 (MSTGVPSGSS…KRKYWWKNCK (81 aa)) the chain is on the cytoplasmic side. Residues 18–78 (RLQQTQNQVD…AKLKRKYWWK (61 aa)) form the v-SNARE coiled-coil homology domain. Glycyl lysine isopeptide (Lys-Gly) (interchain with G-Cter in ubiquitin) cross-links involve residues Lys70, Lys72, and Lys81. The chain crosses the membrane as a helical; Anchor for type IV membrane protein span at residues 82-102 (MWAIGISVLVIIVIIIIVWCV). Residue Ser103 is a topological domain, vesicular.

It belongs to the synaptobrevin family. As to quaternary structure, interacts with POPDC1 (via the C-terminus cytoplasmic tail). Interacts with BCAP31; involved in VAMP3 export from the endoplasmic reticulum. Interacts with BAIAP3; this interaction is increased in the presence of calcium. Interacts with PICALM. Ubiquitinated by RNF167 at Lys-70, Lys-72 and Lys-81, regulating the recycling endosome pathway. In terms of processing, (Microbial infection) Targeted and hydrolyzed by C.botulinum neurotoxin type D (BoNT/D, botD) which hydrolyzes the 46-Lys-|-Leu-47 bond and probably inhibits neurotransmitter release. Post-translationally, (Microbial infection) Targeted and hydrolyzed by C.botulinum neurotoxin type F (BoNT/F, botF) which hydrolyzes the 45-Gln-|-Lys-46 bond and probably inhibits neurotransmitter release. (Microbial infection) Targeted and hydrolyzed by C.tetani toxin (tetX) which hydrolyzes the 63-Gln-|-Phe-64 bond and probably inhibits neurotransmitter release. As to expression, ubiquitous.

It is found in the early endosome membrane. The protein resides in the recycling endosome membrane. It localises to the synapse. The protein localises to the synaptosome. In terms of biological role, SNARE involved in vesicular transport from the late endosomes to the trans-Golgi network. This is Vesicle-associated membrane protein 3 (Vamp3) from Rattus norvegicus (Rat).